We begin with the raw amino-acid sequence, 380 residues long: tRNA-specific 2-thiouridylase MnmA (380 aa).

Residues Gly9–Ser16 and Met35 each bind ATP. The interval Asn94–Asp96 is interaction with target base in tRNA. The Nucleophile role is filled by Cys99. A disulfide bond links Cys99 and Cys195. Gly123 provides a ligand contact to ATP. The interval Lys145–Gln147 is interaction with tRNA. The Cysteine persulfide intermediate role is filled by Cys195. The interval Arg308–Tyr309 is interaction with tRNA.

The protein belongs to the MnmA/TRMU family.

It is found in the cytoplasm. The enzyme catalyses S-sulfanyl-L-cysteinyl-[protein] + uridine(34) in tRNA + AH2 + ATP = 2-thiouridine(34) in tRNA + L-cysteinyl-[protein] + A + AMP + diphosphate + H(+). Its function is as follows. Catalyzes the 2-thiolation of uridine at the wobble position (U34) of tRNA, leading to the formation of s(2)U34. The sequence is that of tRNA-specific 2-thiouridylase MnmA from Stenotrophomonas maltophilia (strain R551-3).